The chain runs to 93 residues: CRISPR-associated endoribonuclease Cas2 (93 aa).

Asp-8 contributes to the Mg(2+) binding site.

Belongs to the CRISPR-associated endoribonuclease Cas2 protein family. In terms of assembly, homodimer, forms a heterotetramer with a Cas1 homodimer. The cofactor is Mg(2+).

In terms of biological role, CRISPR (clustered regularly interspaced short palindromic repeat), is an adaptive immune system that provides protection against mobile genetic elements (viruses, transposable elements and conjugative plasmids). CRISPR clusters contain sequences complementary to antecedent mobile elements and target invading nucleic acids. CRISPR clusters are transcribed and processed into CRISPR RNA (crRNA). Functions as a ssRNA-specific endoribonuclease. Involved in the integration of spacer DNA into the CRISPR cassette. The chain is CRISPR-associated endoribonuclease Cas2 from Thermofilum pendens (strain DSM 2475 / Hrk 5).